A 259-amino-acid chain; its full sequence is DNA repair protein RecO (259 aa).

The protein belongs to the RecO family.

In terms of biological role, involved in DNA repair and RecF pathway recombination. The polypeptide is DNA repair protein RecO (Rhizobium rhizogenes (strain K84 / ATCC BAA-868) (Agrobacterium radiobacter)).